A 565-amino-acid polypeptide reads, in one-letter code: Proline--tRNA ligase (565 aa).

It belongs to the class-II aminoacyl-tRNA synthetase family. ProS type 1 subfamily. Homodimer.

Its subcellular location is the cytoplasm. The catalysed reaction is tRNA(Pro) + L-proline + ATP = L-prolyl-tRNA(Pro) + AMP + diphosphate. Catalyzes the attachment of proline to tRNA(Pro) in a two-step reaction: proline is first activated by ATP to form Pro-AMP and then transferred to the acceptor end of tRNA(Pro). As ProRS can inadvertently accommodate and process non-cognate amino acids such as alanine and cysteine, to avoid such errors it has two additional distinct editing activities against alanine. One activity is designated as 'pretransfer' editing and involves the tRNA(Pro)-independent hydrolysis of activated Ala-AMP. The other activity is designated 'posttransfer' editing and involves deacylation of mischarged Ala-tRNA(Pro). The misacylated Cys-tRNA(Pro) is not edited by ProRS. The chain is Proline--tRNA ligase from Lactobacillus johnsonii (strain CNCM I-12250 / La1 / NCC 533).